Consider the following 357-residue polypeptide: DNA integrity scanning protein DisA (357 aa).

The 139-residue stretch at 8–146 (VKSMINILQL…GNLRYTLKDI (139 aa)) folds into the DAC domain. ATP contacts are provided by residues G75, L93, and 106 to 110 (MRHRT).

The protein belongs to the DisA family. In terms of assembly, homooctamer. Mg(2+) is required as a cofactor.

It catalyses the reaction 2 ATP = 3',3'-c-di-AMP + 2 diphosphate. Functionally, participates in a DNA-damage check-point that is active prior to asymmetric division when DNA is damaged. DisA forms globular foci that rapidly scan along the chromosomes during sporulation, searching for lesions. When a lesion is present, DisA pauses at the lesion site. This triggers a cellular response that culminates in a temporary block in sporulation initiation. In terms of biological role, also has diadenylate cyclase activity, catalyzing the condensation of 2 ATP molecules into cyclic di-AMP (c-di-AMP). c-di-AMP acts as a signaling molecule that couples DNA integrity with progression of sporulation. The rise in c-di-AMP level generated by DisA while scanning the chromosome, operates as a positive signal that advances sporulation; upon encountering a lesion, the DisA focus arrests at the damaged site and halts c-di-AMP synthesis. The sequence is that of DNA integrity scanning protein DisA from Bacillus mycoides (strain KBAB4) (Bacillus weihenstephanensis).